The primary structure comprises 669 residues: Elongation factor G 2 (669 aa).

A tr-type G domain is found at 1–276 (MSIRNIGIMA…SIVDYLPSPF (276 aa)). Residues 10 to 17 (AHIDAGKT), 74 to 78 (DTPGH), and 128 to 131 (NKMD) contribute to the GTP site.

This sequence belongs to the TRAFAC class translation factor GTPase superfamily. Classic translation factor GTPase family. EF-G/EF-2 subfamily.

It is found in the cytoplasm. In terms of biological role, catalyzes the GTP-dependent ribosomal translocation step during translation elongation. During this step, the ribosome changes from the pre-translocational (PRE) to the post-translocational (POST) state as the newly formed A-site-bound peptidyl-tRNA and P-site-bound deacylated tRNA move to the P and E sites, respectively. Catalyzes the coordinated movement of the two tRNA molecules, the mRNA and conformational changes in the ribosome. This Borreliella burgdorferi (strain ATCC 35210 / DSM 4680 / CIP 102532 / B31) (Borrelia burgdorferi) protein is Elongation factor G 2 (fusB).